Here is an 854-residue protein sequence, read N- to C-terminus: Envelope glycoprotein gp150 (854 aa).

The Extracellular segment spans residues 1 to 783 (MAEGFAANRQ…WIGKIPQYLK (783 aa)). N-linked (GlcNAc...) asparagine; by host glycans are attached at residues Asn220, Asn258, Asn269, Asn274, Asn298, Asn330, Asn336, Asn342, Asn418, Asn422, Asn448, Asn469, Asn481, Asn499, Asn518, Asn531, Asn548, and Asn551. Residues 614 to 634 (IMLALATVLSIAGAGTGATAI) are fusion peptide. Residues 641–691 (QQVLATHQEALDKITEALKINNLRLVTLEHQMLVIGLKVEAIEKFLYTAFA) are a coiled coil. The tract at residues 660-678 (INNLRLVTLEHQMLVIGLK) is immunosuppression. Asn715, Asn719, Asn727, and Asn735 each carry an N-linked (GlcNAc...) asparagine; by host glycan. Residues 734-770 (YNQTKYLQQKFYEIIMDIEQNNVQGKQGLQKLQNWQD) adopt a coiled-coil conformation. Residues 784 to 804 (GLLGGILGIGLGILLLILCLP) form a helical membrane-spanning segment. Over 805-854 (TLVDCIRNCISKVLGYTVIAMPEIDDEEETVQMELRKNGRQCGMSEKEEE) the chain is Cytoplasmic.

In terms of assembly, the mature envelope protein (Env) consists of a trimer of SU-TM heterodimers attached by non-covalent interactions or by a labile interchain disulfide bond. In terms of processing, specific enzymatic cleavages in vivo yield mature proteins. Envelope glycoproteins are synthesized as an inactive precursor that is N-glycosylated and processed likely by host cell furin or by a furin-like protease in the Golgi to yield the mature SU and TM proteins. The cleavage site between SU and TM requires the minimal sequence [KR]-X-[KR]-R.

Its subcellular location is the virion membrane. The protein localises to the host cell membrane. Its function is as follows. The surface protein (SU) attaches the virus to the host cell by binding to its receptor. This interaction triggers the refolding of the transmembrane protein (TM) and is thought to activate its fusogenic potential by unmasking its fusion peptide. Fusion occurs at the host cell plasma membrane. Functionally, the transmembrane protein (TM) acts as a class I viral fusion protein. Under the current model, the protein has at least 3 conformational states: pre-fusion native state, pre-hairpin intermediate state, and post-fusion hairpin state. During viral and target cell membrane fusion, the coiled coil regions (heptad repeats) assume a trimer-of-hairpins structure, positioning the fusion peptide in close proximity to the C-terminal region of the ectodomain. The formation of this structure appears to drive apposition and subsequent fusion of viral and target cell membranes. Membranes fusion leads to delivery of the nucleocapsid into the cytoplasm. The protein is Envelope glycoprotein gp150 (env) of Feline immunodeficiency virus (strain San Diego) (FIV).